The following is a 954-amino-acid chain: Valine--tRNA ligase (954 aa).

The 'HIGH' region signature appears at 48-58 (PNVTGSLHMGH). The short motif at 560 to 564 (KMSKS) is the 'KMSKS' region element. Lys563 is an ATP binding site. A coiled-coil region spans residues 886–954 (INKDTELARL…RAQYLSIENL (69 aa)).

This sequence belongs to the class-I aminoacyl-tRNA synthetase family. ValS type 1 subfamily. In terms of assembly, monomer.

The protein localises to the cytoplasm. It catalyses the reaction tRNA(Val) + L-valine + ATP = L-valyl-tRNA(Val) + AMP + diphosphate. In terms of biological role, catalyzes the attachment of valine to tRNA(Val). As ValRS can inadvertently accommodate and process structurally similar amino acids such as threonine, to avoid such errors, it has a 'posttransfer' editing activity that hydrolyzes mischarged Thr-tRNA(Val) in a tRNA-dependent manner. This chain is Valine--tRNA ligase, found in Mannheimia succiniciproducens (strain KCTC 0769BP / MBEL55E).